Reading from the N-terminus, the 252-residue chain is Ribose-5-phosphate isomerase (252 aa).

This sequence belongs to the ribose 5-phosphate isomerase family.

The protein localises to the cytoplasm. It catalyses the reaction aldehydo-D-ribose 5-phosphate = D-ribulose 5-phosphate. It participates in carbohydrate degradation; pentose phosphate pathway; D-ribose 5-phosphate from D-ribulose 5-phosphate (non-oxidative stage): step 1/1. This is Ribose-5-phosphate isomerase (RKI1) from Debaryomyces hansenii (strain ATCC 36239 / CBS 767 / BCRC 21394 / JCM 1990 / NBRC 0083 / IGC 2968) (Yeast).